A 350-amino-acid polypeptide reads, in one-letter code: Hydroxymethylglutaryl-CoA synthase (350 aa).

Asp-30 serves as a coordination point for (3S)-3-hydroxy-3-methylglutaryl-CoA. Glu-82 (proton donor/acceptor) is an active-site residue. Residues Cys-114, Ser-155, Thr-203, and His-236 each contribute to the (3S)-3-hydroxy-3-methylglutaryl-CoA site. Cys-114 (acyl-thioester intermediate) is an active-site residue. Residue His-236 is the Proton donor/acceptor of the active site. CoA is bound at residue Arg-241. (3S)-3-hydroxy-3-methylglutaryl-CoA-binding residues include Arg-245, Asn-268, and Ser-298.

It belongs to the thiolase-like superfamily. Archaeal HMG-CoA synthase family. In terms of assembly, interacts with acetoacetyl-CoA thiolase that catalyzes the precedent step in the pathway and with a DUF35 protein. The acetoacetyl-CoA thiolase/HMG-CoA synthase complex channels the intermediate via a fused CoA-binding site, which allows for efficient coupling of the endergonic thiolase reaction with the exergonic HMGCS reaction.

It catalyses the reaction acetoacetyl-CoA + acetyl-CoA + H2O = (3S)-3-hydroxy-3-methylglutaryl-CoA + CoA + H(+). The protein operates within metabolic intermediate biosynthesis; (R)-mevalonate biosynthesis; (R)-mevalonate from acetyl-CoA: step 2/3. Catalyzes the condensation of acetyl-CoA with acetoacetyl-CoA to form 3-hydroxy-3-methylglutaryl-CoA (HMG-CoA). Functions in the mevalonate (MVA) pathway leading to isopentenyl diphosphate (IPP), a key precursor for the biosynthesis of isoprenoid compounds that are building blocks of archaeal membrane lipids. This is Hydroxymethylglutaryl-CoA synthase from Pyrobaculum calidifontis (strain DSM 21063 / JCM 11548 / VA1).